The following is a 276-amino-acid chain: Rhomboid protease GlpG (276 aa).

6 consecutive transmembrane segments (helical) span residues 94 to 114, 142 to 162, 169 to 189, 192 to 212, 229 to 249, and 250 to 270; these read GPVTWVMMIACVVVFIAMQIL, ALMHFSLMHILFNLLWWWYLG, LGSGKLIVITLISALLSGYVQ, FSGPWFGGLSGVVYALMGYVW, LIIFALIWIVAGWFDLFGMSM, and ANGAHIAGLAVGLAMAFVDSL. Ser-201 acts as the Nucleophile in catalysis. Residue His-254 is part of the active site.

The protein belongs to the peptidase S54 family.

The protein resides in the cell inner membrane. The enzyme catalyses Cleaves type-1 transmembrane domains using a catalytic dyad composed of serine and histidine that are contributed by different transmembrane domains.. Its function is as follows. Rhomboid-type serine protease that catalyzes intramembrane proteolysis. The sequence is that of Rhomboid protease GlpG from Escherichia coli O81 (strain ED1a).